We begin with the raw amino-acid sequence, 337 residues long: Protein BIG GRAIN 1-like (337 aa).

Disordered stretches follow at residues 1 to 32 (MRDMEMRWAAPAPAARGRGRARRRAPDQPSFS), 120 to 163 (SAAG…RPAS), and 179 to 235 (KRPS…PSRS). Basic and acidic residues predominate over residues 137–146 (HEQPDVEKTA). 2 stretches are compositionally biased toward low complexity: residues 150–163 (PGSASARACRRPAS) and 195–209 (PACSTAPPSSSSSYA).

Belongs to the BIG GRAIN 1 (BG1) plant protein family.

It is found in the cell membrane. Functionally, involved in auxin transport. Regulator of the auxin signaling pathway. This is Protein BIG GRAIN 1-like from Oryza sativa subsp. japonica (Rice).